Here is a 371-residue protein sequence, read N- to C-terminus: Maltose/maltodextrin import ATP-binding protein MalK (371 aa).

An ABC transporter domain is found at 4 to 234 (VQLQNVTKAW…PADRFVAGFI (231 aa)). ATP is bound at residue 36-43 (GPSGCGKS).

This sequence belongs to the ABC transporter superfamily. Maltooligosaccharide importer (TC 3.A.1.1.1) family. As to quaternary structure, the complex is composed of two ATP-binding proteins (MalK), two transmembrane proteins (MalG and MalK) and a solute-binding protein (MalE).

The protein localises to the cell inner membrane. It catalyses the reaction D-maltose(out) + ATP + H2O = D-maltose(in) + ADP + phosphate + H(+). In terms of biological role, part of the ABC transporter complex MalEFGK involved in maltose/maltodextrin import. Responsible for energy coupling to the transport system. In Escherichia coli O6:H1 (strain CFT073 / ATCC 700928 / UPEC), this protein is Maltose/maltodextrin import ATP-binding protein MalK.